A 193-amino-acid chain; its full sequence is MSGNAECHFSIWAILAFLGLALTISLIFNIFHCVEKQRQEKICTYSDDYFPREDEYDLEDSPIYGNVDNVALEPVDENCYEQMKARPDRSVNKLQDAPPSQETAVRVCYASLDHNNEGKRRKPRKQKSHLSDKDEEGQMHAKDISLSKTTLVDSYPPESEAIEENIHDDPIRLFGLIRAQKESLHSLDYDLAQ.

At M1–S10 the chain is on the extracellular side. The helical; Signal-anchor for type III membrane protein transmembrane segment at I11–F31 threads the bilayer. Residues H32–Q193 lie on the Cytoplasmic side of the membrane. S46 carries the post-translational modification Phosphoserine. Residue Y80 is modified to Phosphotyrosine. The interval Y80–M83 is interaction with PIK3R1. The tract at residues N116–I166 is disordered. Residues K119–S128 are compositionally biased toward basic residues. A compositionally biased stretch (basic and acidic residues) spans H129–S145.

Homodimer; disulfide-linked. Interacts with CD3Z. When phosphorylated, interacts with PIK3R1. Phosphorylated on tyrosines upon TCR activation.

The protein localises to the cell membrane. Its function is as follows. Stabilizes the TCR (T-cell antigen receptor)/CD3 complex at the surface of T-cells. This chain is T-cell receptor-associated transmembrane adapter 1 (TRAT1), found in Bos taurus (Bovine).